A 373-amino-acid chain; its full sequence is L-threonine 3-dehydrogenase, mitochondrial (373 aa).

Residues 62-67 (GGLGQL), 88-90 (DIR), 106-107 (DI), tyrosine 195, lysine 199, and isoleucine 225 each bind NAD(+). Catalysis depends on tyrosine 195, which acts as the Proton donor/acceptor.

This sequence belongs to the NAD(P)-dependent epimerase/dehydratase family. In terms of assembly, homodimer.

It localises to the mitochondrion. It carries out the reaction L-threonine + NAD(+) = (2S)-2-amino-3-oxobutanoate + NADH + H(+). It functions in the pathway amino-acid degradation; L-threonine degradation via oxydo-reductase pathway; glycine from L-threonine: step 1/2. Functionally, catalyzes the NAD(+)-dependent oxidation of L-threonine to 2-amino-3-ketobutyrate, mediating L-threonine catabolism. In Bos taurus (Bovine), this protein is L-threonine 3-dehydrogenase, mitochondrial.